The primary structure comprises 264 residues: Thymidylate synthase (264 aa).

DUMP-binding positions include Arg-21 and 126–127 (RR). Cys-146 functions as the Nucleophile in the catalytic mechanism. Residues 166–169 (RSAD), Asn-177, and 207–209 (HLY) each bind dUMP. Asp-169 is a binding site for (6R)-5,10-methylene-5,6,7,8-tetrahydrofolate. Ala-263 provides a ligand contact to (6R)-5,10-methylene-5,6,7,8-tetrahydrofolate.

The protein belongs to the thymidylate synthase family. Bacterial-type ThyA subfamily. In terms of assembly, homodimer.

Its subcellular location is the cytoplasm. It catalyses the reaction dUMP + (6R)-5,10-methylene-5,6,7,8-tetrahydrofolate = 7,8-dihydrofolate + dTMP. The protein operates within pyrimidine metabolism; dTTP biosynthesis. Catalyzes the reductive methylation of 2'-deoxyuridine-5'-monophosphate (dUMP) to 2'-deoxythymidine-5'-monophosphate (dTMP) while utilizing 5,10-methylenetetrahydrofolate (mTHF) as the methyl donor and reductant in the reaction, yielding dihydrofolate (DHF) as a by-product. This enzymatic reaction provides an intracellular de novo source of dTMP, an essential precursor for DNA biosynthesis. The polypeptide is Thymidylate synthase (Nitrobacter hamburgensis (strain DSM 10229 / NCIMB 13809 / X14)).